Reading from the N-terminus, the 475-residue chain is Cytosolic enolase 3 (475 aa).

Ser2 bears the N-acetylserine mark. Substrate contacts are provided by His200 and Glu209. Asp252 serves as the catalytic Proton donor. Positions 287, 336, and 361 each coordinate Mg(2+). Residues Glu336 and Asp361 each contribute to the substrate site. Residue Lys386 is the Proton acceptor of the active site. Substrate-binding positions include 413 to 416 (SHRC) and Lys437.

The protein belongs to the enolase family. In terms of assembly, homodimer. It depends on Mg(2+) as a cofactor.

It is found in the cytoplasm. The protein localises to the nucleus. The catalysed reaction is (2R)-2-phosphoglycerate = phosphoenolpyruvate + H2O. Its pathway is carbohydrate degradation; glycolysis; pyruvate from D-glyceraldehyde 3-phosphate: step 4/5. The protein is Cytosolic enolase 3 (ENO3) of Arabidopsis thaliana (Mouse-ear cress).